The chain runs to 244 residues: ATP-dependent dethiobiotin synthetase BioD 1 (244 aa).

12-17 (NVGKTV) contacts ATP. Thr16 contacts Mg(2+). Residue Lys37 is part of the active site. Asp68 contributes to the ATP binding site. Residues Asp68 and Glu126 each coordinate Mg(2+). Residues 186–187 (NR), 215–217 (PYL), and Glu222 each bind ATP.

The protein belongs to the dethiobiotin synthetase family. As to quaternary structure, homodimer. The cofactor is Mg(2+).

The protein resides in the cytoplasm. The enzyme catalyses (7R,8S)-7,8-diammoniononanoate + CO2 + ATP = (4R,5S)-dethiobiotin + ADP + phosphate + 3 H(+). It functions in the pathway cofactor biosynthesis; biotin biosynthesis; biotin from 7,8-diaminononanoate: step 1/2. Catalyzes a mechanistically unusual reaction, the ATP-dependent insertion of CO2 between the N7 and N8 nitrogen atoms of 7,8-diaminopelargonic acid (DAPA, also called 7,8-diammoniononanoate) to form a ureido ring. The protein is ATP-dependent dethiobiotin synthetase BioD 1 of Pasteurella multocida (strain Pm70).